The following is a 118-amino-acid chain: MICOS complex subunit MIC13 (118 aa).

The Mitochondrial matrix portion of the chain corresponds to 1–7; the sequence is MVARVWS. A helical membrane pass occupies residues 8–26; that stretch reads LMRFLIKGSVAGGAVYLVY. The Mitochondrial intermembrane segment spans residues 27–118; that stretch reads DQELLGPSDK…GWEYVKARTK (92 aa).

It belongs to the MICOS complex subunit Mic13 family. As to quaternary structure, component of the mitochondrial contact site and cristae organizing system (MICOS) complex, composed of at least MICOS10/MIC10, CHCHD3/MIC19, CHCHD6/MIC25, APOO/MIC26, MICOS13/MIC13, APOOL/MIC27 and IMMT/MIC60. The complex associates with mitochondrial outer membrane proteins SAMM50, MTX1 and MTX2, and with HSPA9.

It is found in the mitochondrion inner membrane. Its function is as follows. Component of the MICOS complex, a large protein complex of the mitochondrial inner membrane that plays crucial roles in the maintenance of crista junctions, inner membrane architecture, and formation of contact sites to the outer membrane. Constituent of mature MICOS complex, it is required for the formation of cristae junction (CJ) and maintenance of cristae morphology. Required for the incorporation of MICOS10/MIC10 into the MICOS complex. This chain is MICOS complex subunit MIC13, found in Macaca fascicularis (Crab-eating macaque).